The following is a 224-amino-acid chain: NADH-quinone oxidoreductase subunit B (224 aa).

Positions 67, 68, 133, and 162 each coordinate [4Fe-4S] cluster. Positions aspartate 200 to isoleucine 224 are disordered. A compositionally biased stretch (basic and acidic residues) spans methionine 201 to isoleucine 224.

The protein belongs to the complex I 20 kDa subunit family. In terms of assembly, NDH-1 is composed of 14 different subunits. Subunits NuoB, C, D, E, F, and G constitute the peripheral sector of the complex. The cofactor is [4Fe-4S] cluster.

Its subcellular location is the cell inner membrane. The catalysed reaction is a quinone + NADH + 5 H(+)(in) = a quinol + NAD(+) + 4 H(+)(out). In terms of biological role, NDH-1 shuttles electrons from NADH, via FMN and iron-sulfur (Fe-S) centers, to quinones in the respiratory chain. The immediate electron acceptor for the enzyme in this species is believed to be ubiquinone. Couples the redox reaction to proton translocation (for every two electrons transferred, four hydrogen ions are translocated across the cytoplasmic membrane), and thus conserves the redox energy in a proton gradient. The protein is NADH-quinone oxidoreductase subunit B of Aeromonas salmonicida (strain A449).